We begin with the raw amino-acid sequence, 395 residues long: Probable alcohol dehydrogenase EutG (395 aa).

NAD(+) contacts are provided by residues Asp57, 116 to 120 (GSVLD), 156 to 160 (TTAGT), Lys178, and 197 to 201 (LTEGV). 4 residues coordinate Fe cation: Asp212, His216, His281, and His295. NAD(+) contacts are provided by His295 and Asp354.

The protein belongs to the iron-containing alcohol dehydrogenase family. The cofactor is Fe cation.

The protein resides in the bacterial microcompartment. It carries out the reaction ethanol + NAD(+) = acetaldehyde + NADH + H(+). It participates in amine and polyamine degradation; ethanolamine degradation. May act on the acetaldehyde produced from the degradation of ethanolamine, producing ethanol. Active on acetaldehyde and isobutyraldehyde in vitro. In vitro works equally well with NADH or NADPH. The chain is Probable alcohol dehydrogenase EutG (eutG) from Escherichia coli (strain K12).